The primary structure comprises 426 residues: Histidine--tRNA ligase (426 aa).

This sequence belongs to the class-II aminoacyl-tRNA synthetase family.

It localises to the cytoplasm. It catalyses the reaction tRNA(His) + L-histidine + ATP = L-histidyl-tRNA(His) + AMP + diphosphate + H(+). The protein is Histidine--tRNA ligase of Sulfurisphaera tokodaii (strain DSM 16993 / JCM 10545 / NBRC 100140 / 7) (Sulfolobus tokodaii).